The chain runs to 89 residues: Cell division topological specificity factor (89 aa).

This sequence belongs to the MinE family.

Prevents the cell division inhibition by proteins MinC and MinD at internal division sites while permitting inhibition at polar sites. This ensures cell division at the proper site by restricting the formation of a division septum at the midpoint of the long axis of the cell. This is Cell division topological specificity factor from Brucella anthropi (strain ATCC 49188 / DSM 6882 / CCUG 24695 / JCM 21032 / LMG 3331 / NBRC 15819 / NCTC 12168 / Alc 37) (Ochrobactrum anthropi).